The primary structure comprises 179 residues: Large ribosomal subunit protein uL5 (179 aa).

This sequence belongs to the universal ribosomal protein uL5 family. Part of the 50S ribosomal subunit; part of the 5S rRNA/L5/L18/L25 subcomplex. Contacts the 5S rRNA and the P site tRNA. Forms a bridge to the 30S subunit in the 70S ribosome.

Its function is as follows. This is one of the proteins that bind and probably mediate the attachment of the 5S RNA into the large ribosomal subunit, where it forms part of the central protuberance. In the 70S ribosome it contacts protein S13 of the 30S subunit (bridge B1b), connecting the 2 subunits; this bridge is implicated in subunit movement. Contacts the P site tRNA; the 5S rRNA and some of its associated proteins might help stabilize positioning of ribosome-bound tRNAs. The protein is Large ribosomal subunit protein uL5 of Parasynechococcus marenigrum (strain WH8102).